The chain runs to 83 residues: Exodeoxyribonuclease 7 small subunit (83 aa).

The protein belongs to the XseB family. As to quaternary structure, heterooligomer composed of large and small subunits.

The protein localises to the cytoplasm. It catalyses the reaction Exonucleolytic cleavage in either 5'- to 3'- or 3'- to 5'-direction to yield nucleoside 5'-phosphates.. In terms of biological role, bidirectionally degrades single-stranded DNA into large acid-insoluble oligonucleotides, which are then degraded further into small acid-soluble oligonucleotides. The protein is Exodeoxyribonuclease 7 small subunit of Rhodopseudomonas palustris (strain HaA2).